The chain runs to 635 residues: Signal recognition particle subunit SRP72 (635 aa).

TPR repeat units lie at residues 7–42, 75–105, 106–139, 171–204, 220–253, 255–290, and 436–469; these read GGLY…YPKE, GHVG…DKDD, VKAL…HSDD, YSQL…CRKS, DSIR…NHPD, SVKA…DQTK, and VEVE…QCRL. The tract at residues 539 to 635 is disordered; sequence KRKRKIRLPK…QKKKKNASKF (97 aa). Basic and acidic residues predominate over residues 557-569; the sequence is DPERWLPRQERST. The segment covering 625 to 635 has biased composition (basic residues); it reads KQKKKKNASKF.

Belongs to the SRP72 family. As to quaternary structure, heterodimer with srpa-68. Srpa-68-srpa-72 heterodimer formation is stabilized by the presence of 7SL RNA. Component of a signal recognition particle (SRP) complex that consists of a 7SL RNA molecule of 300 nucleotides and six protein subunits: srpa-72, srpa-68, SRP54, F37F2.2/SRP19, F25G6.8/SRP14 and ZK512.4/SRP9. Within the SRP complex, interacts (via N-terminus) with srpa-68 (via C-terminus).

Its subcellular location is the cytoplasm. The protein resides in the endoplasmic reticulum. Component of the signal recognition particle (SRP) complex, a ribonucleoprotein complex that mediates the cotranslational targeting of secretory and membrane proteins to the endoplasmic reticulum (ER). The SRP complex interacts with the signal sequence in nascent secretory and membrane proteins and directs them to the membrane of the ER. The SRP complex targets the ribosome-nascent chain complex to the SRP receptor (SR), which is anchored in the ER, where SR compaction and GTPase rearrangement drive cotranslational protein translocation into the ER. Binds the signal recognition particle RNA (7SL RNA) in presence of srpa-68. Can bind 7SL RNA with low affinity. The SRP complex possibly participates in the elongation arrest function. The chain is Signal recognition particle subunit SRP72 from Caenorhabditis elegans.